The primary structure comprises 1430 residues: DNA-directed RNA polymerase subunit beta' (1430 aa).

Residues C70, C72, C85, and C88 each contribute to the Zn(2+) site. Mg(2+) is bound by residues D495, D497, and D499. C838, C912, C919, and C922 together coordinate Zn(2+).

The protein belongs to the RNA polymerase beta' chain family. In terms of assembly, the RNAP catalytic core consists of 2 alpha, 1 beta, 1 beta' and 1 omega subunit. When a sigma factor is associated with the core the holoenzyme is formed, which can initiate transcription. Mg(2+) serves as cofactor. Zn(2+) is required as a cofactor.

It carries out the reaction RNA(n) + a ribonucleoside 5'-triphosphate = RNA(n+1) + diphosphate. In terms of biological role, DNA-dependent RNA polymerase catalyzes the transcription of DNA into RNA using the four ribonucleoside triphosphates as substrates. The protein is DNA-directed RNA polymerase subunit beta' of Rhodospirillum centenum (strain ATCC 51521 / SW).